Here is a 274-residue protein sequence, read N- to C-terminus: Shikimate kinase (274 aa).

P86–A96 provides a ligand contact to ATP.

The protein belongs to the GHMP kinase family. Archaeal shikimate kinase subfamily.

The protein resides in the cytoplasm. It carries out the reaction shikimate + ATP = 3-phosphoshikimate + ADP + H(+). Its pathway is metabolic intermediate biosynthesis; chorismate biosynthesis; chorismate from D-erythrose 4-phosphate and phosphoenolpyruvate: step 5/7. This chain is Shikimate kinase (aroK), found in Pyrococcus abyssi (strain GE5 / Orsay).